Here is a 171-residue protein sequence, read N- to C-terminus: Stage III sporulation protein AB (171 aa).

The chain is Stage III sporulation protein AB (spoIIIAB) from Bacillus subtilis (strain 168).